The sequence spans 437 residues: C-terminal-binding protein 2 (437 aa).

NAD(+) is bound by residues S103, 183-188 (IGLGRI), D207, 240-246 (CNLNEHN), 267-269 (TAR), and D293. R269 is a catalytic residue. Residue E298 is part of the active site. The active-site Proton donor is H318. An NAD(+)-binding site is contributed by 318–321 (HTAW). A disordered region spans residues 410–437 (PLIPSVSHTPSPGQTTKPDPDREIPTDQ). Polar residues predominate over residues 415–426 (VSHTPSPGQTTK). Positions 427–437 (PDPDREIPTDQ) are enriched in basic and acidic residues.

This sequence belongs to the D-isomer specific 2-hydroxyacid dehydrogenase family. Interacts with the C-terminus of tcf7l1-a via the consensus motifs P-X-[DNS]-L-[STVA].

Its subcellular location is the nucleus. In terms of biological role, corepressor targeting diverse transcription regulators. The chain is C-terminal-binding protein 2 (ctbp2) from Xenopus laevis (African clawed frog).